A 361-amino-acid polypeptide reads, in one-letter code: Tryptophan--tRNA ligase, mitochondrial (361 aa).

The N-terminal 16 residues, 1 to 16, are a transit peptide targeting the mitochondrion; the sequence is MAKLPKITSLLPHSRV. Residues Gln21 and 27–30 contribute to the ATP site; that span reads HIGN. A 'HIGH' region motif is present at residues 22 to 30; sequence PTGIPHIGN. Asp165 provides a ligand contact to L-tryptophan. ATP contacts are provided by residues 177-179, 225-229, and Lys228; these read GKD and KMSKS. Positions 225 to 229 match the 'KMSKS' region motif; sequence KMSKS.

It belongs to the class-I aminoacyl-tRNA synthetase family. As to quaternary structure, homodimer.

It localises to the mitochondrion matrix. The enzyme catalyses tRNA(Trp) + L-tryptophan + ATP = L-tryptophyl-tRNA(Trp) + AMP + diphosphate + H(+). This is Tryptophan--tRNA ligase, mitochondrial from Schizosaccharomyces pombe (strain 972 / ATCC 24843) (Fission yeast).